Reading from the N-terminus, the 230-residue chain is Flagellar L-ring protein (230 aa).

Residues 1–22 (MSPISNFARIALACTVAALLGG) form the signal peptide. Cys-23 carries the N-palmitoyl cysteine lipid modification. Cys-23 carries the S-diacylglycerol cysteine lipid modification.

It belongs to the FlgH family. In terms of assembly, the basal body constitutes a major portion of the flagellar organelle and consists of four rings (L,P,S, and M) mounted on a central rod.

Its subcellular location is the cell outer membrane. The protein localises to the bacterial flagellum basal body. In terms of biological role, assembles around the rod to form the L-ring and probably protects the motor/basal body from shearing forces during rotation. In Stenotrophomonas maltophilia (strain K279a), this protein is Flagellar L-ring protein.